Consider the following 650-residue polypeptide: Leukocyte immunoglobulin-like receptor subfamily B member 1 (650 aa).

Residues 1–23 (MTPILTVLICLGLSLGPRTHVQA) form the signal peptide. The Extracellular segment spans residues 24-461 (GHLPKPTLWA…QSGLGRHLGV (438 aa)). Ig-like C2-type domains are found at residues 27–115 (PKPT…DPLE), 116–221 (LVVT…LVLG), 222–312 (VSKK…APSD), and 313–409 (PLDI…YLLT). 4 cysteine pairs are disulfide-bonded: Cys49/Cys98, Cys145/Cys197, Cys157/Cys167, and Cys246/Cys297. 3 N-linked (GlcNAc...) asparagine glycosylation sites follow: Asn281, Asn302, and Asn341. Cys346 and Cys397 form a disulfide bridge. Residues 415–451 (LELVVSGPSGGPSSPTTGPTSTSGPEDQPLTPTGSDP) are disordered. The span at 425–439 (GPSSPTTGPTSTSGP) shows a compositional bias: low complexity. A helical membrane pass occupies residues 462 to 482 (VIGILVAVILLLLLLLLLFLI). At 483 to 650 (LRHRRQGKHW…PSIYATLAIH (168 aa)) the chain is on the cytoplasmic side. Residues 491-524 (HWTSTQRKADFQHPAGAVGPEPTDRGLQWRSSPA) form a disordered region. 2 short sequence motifs (ITIM motif) span residues 531–536 (NLYAAV) and 560–565 (VTYAEV). Tyr533 is subject to Phosphotyrosine. Residues 563 to 650 (AEVKHSRPRR…PSIYATLAIH (88 aa)) are disordered. Basic and acidic residues-rich tracts occupy residues 564–574 (EVKHSRPRREM) and 586–600 (LDTK…RQMD). 2 consecutive short sequence motifs (ITIM motif) follow at residues 612–617 (VTYAQL) and 642–647 (SIYATL). Phosphotyrosine is present on residues Tyr614 and Tyr644.

As to quaternary structure, binds PTPN6 when phosphorylated. Binds FCER1A and FCGR1A. Interacts with human cytomegalovirus/HHV-5 protein UL18. Interacts with peptide-bound HLA-G-B2M complex. Interacts with peptide-bound HLA-F-B2M complex but not with peptide-free HLA-F open conformer. It does not probe the peptide sequence directly. Post-translationally, phosphorylated on tyrosine residues. Dephosphorylated by PTPN6. As to expression, expressed in B cells, monocytes and various dendritic cell (DC) subsets including myeloid, plasmacytoid and tolerogenic DCs (at protein level). Expressed in decidual macrophages (at protein level). Expressed in decidual NK cells (at protein level).

It localises to the cell membrane. The protein resides in the secreted. In terms of biological role, receptor for class I MHC antigens. Recognizes a broad spectrum of HLA-A, HLA-B, HLA-C, HLA-G and HLA-F alleles. Receptor for H301/UL18, a human cytomegalovirus class I MHC homolog. Ligand binding results in inhibitory signals and down-regulation of the immune response. Engagement of LILRB1 present on natural killer cells or T-cells by class I MHC molecules protects the target cells from lysis. Interaction with HLA-B or HLA-E leads to inhibition of FCER1A signaling and serotonin release. Inhibits FCGR1A-mediated phosphorylation of cellular proteins and mobilization of intracellular calcium ions. Recognizes HLA-G in complex with B2M/beta-2 microglobulin and a nonamer self-peptide. Upon interaction with peptide-bound HLA-G-B2M complex, triggers secretion of growth-promoting factors by decidual NK cells. Reprograms B cells toward an immune suppressive phenotype. This Homo sapiens (Human) protein is Leukocyte immunoglobulin-like receptor subfamily B member 1.